The primary structure comprises 73 residues: Large ribosomal subunit protein bL31 (73 aa).

Cys-16, Cys-18, Cys-36, and Cys-39 together coordinate Zn(2+).

It belongs to the bacterial ribosomal protein bL31 family. Type A subfamily. In terms of assembly, part of the 50S ribosomal subunit. The cofactor is Zn(2+).

In terms of biological role, binds the 23S rRNA. In Desulfotalea psychrophila (strain LSv54 / DSM 12343), this protein is Large ribosomal subunit protein bL31.